The primary structure comprises 231 residues: GTP-binding protein RHO3 (231 aa).

Position 23 to 30 (Gly23 to Thr30) interacts with GTP. An Effector region motif is present at residues Tyr45–Tyr53. GTP is bound by residues Asp70–Gln74 and Leu128–Asp131. Residues Ser139–Asp150 are compositionally biased toward polar residues. The segment at Ser139–Ser165 is disordered. Low complexity predominate over residues Asn151 to Ser165. Cys228 is subject to Cysteine methyl ester. A lipid anchor (S-farnesyl cysteine) is attached at Cys228. Residues Thr229 to Met231 constitute a propeptide, removed in mature form.

It belongs to the small GTPase superfamily. Rho family. In terms of assembly, interacts with TOS7.

The protein localises to the cell membrane. With respect to regulation, activity is positively regulated by the GTPase activating protein (GAP) RGD1. Functionally, plays an important role in cell growth. Required to keep the uninucleated state. Modulates morphogenesis during bud growth via directing organization of the actin cytoskeleton and the position of the secretory machinery for exocytosis. This Saccharomyces cerevisiae (strain ATCC 204508 / S288c) (Baker's yeast) protein is GTP-binding protein RHO3.